The chain runs to 679 residues: MSKNLLIELGLEELPAYVVTPSEKQLGERLATFLTENRLSFEDIQTFSTPRRLAVRVSGLADQQTDLTEDFKGPAKKIALDADGNFSKAAQGFVRGKGLTTDAIEFREVKGVEYVYVTKHEAGKPAKEVLLGVTEVLSAMTFPVSMHWANNSFEYIRPVHTLTVLLNDEALELDFLDIHSGRVSRGHRFLGTETTITSADSYEADLRSQFVIADAKERQEMIVEQIKTLEVEQGVQVDIDEDLLNEVLNLVEFPTAFMGSFEAKYLDVPEEVLVTSMKNHQRYFVVRDQAGHLMPNFVSVRNGNDQAIENVIKGNEKVLVARLEDGEFFWREDQKLQIADLVAKLTNVTFHEKIGSLAEHMDRTRVIAASLAKEANLSAEEVTAVDRAAQIYKFDLLTGMVGEFDELQGIMGEKYALLAGEDAAVARAIREHYLPDAAGGALPETKVGAVLALADKLDTLLSFFSVGLIPSGSNDPYALRRATQGIVRILDHFGWRIPMDKLVDSLYDLSFDSLTYANKADVMNFIRARVDKMMGKAAPKDIREAVLESSTFVVPEMLAAAEALVKASHTENYKPAVESLSRAFNLAEKADASVQVDPSLFENEQENTLSAAIQGLTLAGSAAQQLEQVFALSPVINDFFDNTMVMAEDQALKNNRLAILSDLVSKAKTIAAFNQLNTK.

The protein belongs to the class-II aminoacyl-tRNA synthetase family. As to quaternary structure, tetramer of two alpha and two beta subunits.

The protein localises to the cytoplasm. The enzyme catalyses tRNA(Gly) + glycine + ATP = glycyl-tRNA(Gly) + AMP + diphosphate. This chain is Glycine--tRNA ligase beta subunit, found in Streptococcus pyogenes serotype M49 (strain NZ131).